An 858-amino-acid chain; its full sequence is Leucine--tRNA ligase (858 aa).

The 'HIGH' region signature appears at 42-52 (PYPSGRLHMGH). The 'KMSKS' region motif lies at 618 to 622 (KMSKS). ATP is bound at residue Lys621.

Belongs to the class-I aminoacyl-tRNA synthetase family.

The protein localises to the cytoplasm. It carries out the reaction tRNA(Leu) + L-leucine + ATP = L-leucyl-tRNA(Leu) + AMP + diphosphate. The polypeptide is Leucine--tRNA ligase (Aliivibrio fischeri (strain MJ11) (Vibrio fischeri)).